We begin with the raw amino-acid sequence, 569 residues long: MPYRISRQAYAETYGPTTGDRIRLADTELILEVEKDFTTYGDEVKFGGGKVIRDGMGQSQTSRAGGAVDTVITNALILDWWGIVKADIGLKDGRIVGIGKAGNPDIQEGVTIVIGPGTEAIAGEGHILTAGGIDTHIHFICPQQIETALASGVTTLMGGGTGPATGTNATTCTPGAFHIGRMLQAAEGLPVNLGFFGKGNASTPEALEEQVRAGACGLKLHEDWGTTPAAIDACLSVADQMDVQVCIHTDTLNEAGFVEDTIAAIKGRTIHTFHTEGAGGGHAPDIIKICGEANVLPSSTNPTRPYTRNTLEEHLDMLMVCHHLDPKIPEDVAFAESRIRRETIAAEDILHDLGAFSIIASDSQAMGRVGEVITRTFQTAHKMKVQRGALPEDSSRNDNHRLKRYIAKVTINPAIAHGISSQVGSVETGKLADLVLWKPGFFGIRPQLVVKGGSIVWAQMGDANASIPTPGPVHGRPMFAAFGKALAPSCLTFMSDAAMNDNIQSKLGLKRTCIAVENTREVGKSALKLNSALPNMSVDPQTYEVFADGELLTCEPAEVLPLAQRYLLL.

The 439-residue stretch at 131–569 (GGIDTHIHFI…LPLAQRYLLL (439 aa)) folds into the Urease domain. The Ni(2+) site is built by His136, His138, and Lys219. Position 219 is an N6-carboxylysine (Lys219). Residue His221 participates in substrate binding. Positions 248 and 274 each coordinate Ni(2+). His322 acts as the Proton donor in catalysis. Asp362 is a binding site for Ni(2+).

This sequence belongs to the metallo-dependent hydrolases superfamily. Urease alpha subunit family. As to quaternary structure, heterotrimer of UreA (gamma), UreB (beta) and UreC (alpha) subunits. Three heterotrimers associate to form the active enzyme. It depends on Ni cation as a cofactor. Carboxylation allows a single lysine to coordinate two nickel ions.

The protein localises to the cytoplasm. The catalysed reaction is urea + 2 H2O + H(+) = hydrogencarbonate + 2 NH4(+). It participates in nitrogen metabolism; urea degradation; CO(2) and NH(3) from urea (urease route): step 1/1. This is Urease subunit alpha from Synechococcus sp. (strain CC9311).